A 148-amino-acid polypeptide reads, in one-letter code: Large ribosomal subunit protein bL9 (148 aa).

Belongs to the bacterial ribosomal protein bL9 family.

In terms of biological role, binds to the 23S rRNA. This chain is Large ribosomal subunit protein bL9, found in Salinispora arenicola (strain CNS-205).